Here is a 358-residue protein sequence, read N- to C-terminus: Methylthioribose-1-phosphate isomerase (358 aa).

Residues 54-56 (RGA), Arg-96, and Gln-205 each bind substrate. Asp-246 functions as the Proton donor in the catalytic mechanism. 256-257 (NK) contributes to the substrate binding site.

It belongs to the eIF-2B alpha/beta/delta subunits family. MtnA subfamily.

It carries out the reaction 5-(methylsulfanyl)-alpha-D-ribose 1-phosphate = 5-(methylsulfanyl)-D-ribulose 1-phosphate. The protein operates within amino-acid biosynthesis; L-methionine biosynthesis via salvage pathway; L-methionine from S-methyl-5-thio-alpha-D-ribose 1-phosphate: step 1/6. Its function is as follows. Catalyzes the interconversion of methylthioribose-1-phosphate (MTR-1-P) into methylthioribulose-1-phosphate (MTRu-1-P). This chain is Methylthioribose-1-phosphate isomerase, found in Stutzerimonas stutzeri (strain A1501) (Pseudomonas stutzeri).